The primary structure comprises 155 residues: Arginine repressor (155 aa).

It belongs to the ArgR family.

The protein localises to the cytoplasm. It functions in the pathway amino-acid biosynthesis; L-arginine biosynthesis [regulation]. In terms of biological role, regulates arginine biosynthesis genes. This chain is Arginine repressor, found in Histophilus somni (strain 2336) (Haemophilus somnus).